The following is a 478-amino-acid chain: Protein MAINTENANCE OF MERISTEMS (478 aa).

A disordered region spans residues 459–478; the sequence is ASTTNKRKRREEQQQTDWSE. Residues 464–468 carry the Nuclear localization signal motif; sequence KRKRR.

Expressed in root meristem, root vasculature, shoot apical meristem (SAM), leaf vasculature and ovules.

Its subcellular location is the nucleus. Required for the organization of the root apical meristem (RAM) and the shoot apical meristem (SAM). Required to maintain genome stability and cell division activity in meristematic cells. The protein is Protein MAINTENANCE OF MERISTEMS of Arabidopsis thaliana (Mouse-ear cress).